The following is a 631-amino-acid chain: Phosphomethylpyrimidine synthase (631 aa).

Substrate contacts are provided by residues Asn-239, Met-268, Tyr-297, His-333, 353–355 (SRG), 394–397 (DGLR), and Glu-433. Residue His-437 participates in Zn(2+) binding. Tyr-460 is a binding site for substrate. His-501 contacts Zn(2+). The [4Fe-4S] cluster site is built by Cys-581, Cys-584, and Cys-589.

Belongs to the ThiC family. Homodimer. It depends on [4Fe-4S] cluster as a cofactor.

It catalyses the reaction 5-amino-1-(5-phospho-beta-D-ribosyl)imidazole + S-adenosyl-L-methionine = 4-amino-2-methyl-5-(phosphooxymethyl)pyrimidine + CO + 5'-deoxyadenosine + formate + L-methionine + 3 H(+). The protein operates within cofactor biosynthesis; thiamine diphosphate biosynthesis. In terms of biological role, catalyzes the synthesis of the hydroxymethylpyrimidine phosphate (HMP-P) moiety of thiamine from aminoimidazole ribotide (AIR) in a radical S-adenosyl-L-methionine (SAM)-dependent reaction. This is Phosphomethylpyrimidine synthase from Shigella dysenteriae serotype 1 (strain Sd197).